The primary structure comprises 307 residues: Exosome complex component RRP45A (307 aa).

The protein belongs to the RNase PH family. In terms of tissue distribution, expressed in roots, leaves, stems, buds and siliques.

It localises to the cytoplasm. Its subcellular location is the nucleus. Its function is as follows. Probable 3'-&gt;5' exoribonuclease involved in the regulation of cuticular wax biosynthesis. Can perform exosomal functions and partially complement the yeast rrp45 null mutant. The sequence is that of Exosome complex component RRP45A from Arabidopsis thaliana (Mouse-ear cress).